Consider the following 399-residue polypeptide: Beta-1,6-galactosyltransferase GALT31A (399 aa).

Topologically, residues 1–12 (MGMGRYQKSATS) are cytoplasmic. The chain crosses the membrane as a helical; Signal-anchor for type II membrane protein span at residues 13 to 35 (GVSARWVFVLCISSFLLGVLVVN). At 36–399 (RLLASFETVD…GDGAIWHSSF (364 aa)) the chain is on the lumenal side.

This sequence belongs to the glycosyltransferase 31 family. Interacts with GALT29A. Requires Mn(2+) as cofactor.

It is found in the golgi apparatus membrane. Its pathway is protein modification; protein glycosylation. In terms of biological role, beta-galactosyltransferase involved in elongation of beta-1,6-linked galactan side chains on arabinogalactan proteins. Required for the progression of embryogenesis beyond the globular stage. Beta-galactosyltransferase involved in the biosynthesis of type II arabinogalactan. Transfers galactose from UDP-galactose to a mixture of various oligosaccharides derived from arabinogalactan proteins. Forms a complex with GALT29A that can work cooperatively to enhance the activities of adding galactose residues at O6 positions to beta-1,6-linked galactan and beta-1,3-linked galactan. The chain is Beta-1,6-galactosyltransferase GALT31A from Arabidopsis thaliana (Mouse-ear cress).